The sequence spans 543 residues: EH domain-containing protein 2 (543 aa).

The residue at position 3 (Ser3) is a Phosphoserine. Positions 55 to 286 (FDGKPMVLVA…DLFRDIQGLP (232 aa)) constitute a Dynamin-type G domain. The segment at 65–72 (GQYSTGKT) is G1 motif. 65 to 72 (GQYSTGKT) is a binding site for ATP. The tract at residues 91-92 (EP) is G2 motif. Positions 120–122 (KPF) match the KPF loop; caveolar targeting motif. Residues 153–156 (DTPG) form a G3 motif region. Residues 219–222 (NKAD) are G4 motif. Residue Lys220 coordinates ATP. Residue Val243 is a region of interest, G5 motif. Position 258 (Trp258) interacts with ATP. A mediates membrane-binding region spans residues 320–340 (SVFGKENKKKQLILKLPVIFA). A phosphoserine mark is found at Ser438, Ser468, Ser470, Ser484, and Ser493. Residues 449-537 (DKSKYDEIFY…RRLVPPSKRR (89 aa)) enclose the EH domain. Positions 481-516 (LPNSVLGRIWKLSDVDRDGMLDDEEFALASHLIEAK) constitute an EF-hand domain. Ca(2+) contacts are provided by Asp494, Asp496, Asp498, Met500, and Glu505. Residues 523–543 (PANLPRRLVPPSKRRHKGSAE) are disordered. The segment covering 534–543 (SKRRHKGSAE) has biased composition (basic residues).

It belongs to the TRAFAC class dynamin-like GTPase superfamily. Dynamin/Fzo/YdjA family. EHD subfamily. In terms of assembly, homodimer and homooligomer. Interacts with EHD1. May also interact with EHD3 and EHD4. Interacts with MYOF. Interacts with EHBP1. Interacts with FER1L5 (via second C2 domain). Interacts with CAV1 in a cholesterol-dependent manner. Interacts (via EH domain) with PACSIN2 (via NPF motifs); this interaction probably stabilizes the caveolae. Highly expressed in heart and moderately expressed in placenta, lung, and skeletal muscle.

The protein localises to the cell membrane. It localises to the membrane. Its subcellular location is the caveola. The protein resides in the endosome membrane. It is found in the cytoplasm. The protein localises to the cytosol. The very low intrinsic ATPase activity is increased upon interaction with liposomes. In terms of biological role, ATP- and membrane-binding protein that controls membrane reorganization/tubulation upon ATP hydrolysis. Plays a role in membrane trafficking between the plasma membrane and endosomes. Important for the internalization of GLUT4. Required for fusion of myoblasts to skeletal muscle myotubes. Required for normal translocation of FER1L5 to the plasma membrane. Regulates the equilibrium between cell surface-associated and cell surface-dissociated caveolae by constraining caveolae at the cell membrane. In Homo sapiens (Human), this protein is EH domain-containing protein 2.